We begin with the raw amino-acid sequence, 349 residues long: Transcription repressor OFP5 (349 aa).

Disordered stretches follow at residues 1-20, 29-94, and 143-183; these read MMRWGRKKPVSSSSSSGLSR, KLSG…KESN, and KQRC…GYSR. Over residues 10–20 the composition is skewed to low complexity; that stretch reads VSSSSSSGLSR. A compositionally biased stretch (basic and acidic residues) spans 37-48; sequence KPAKEKKQDEKA. The span at 49-62 shows a compositional bias: polar residues; sequence SQNISVKTSLSSTT. Basic and acidic residues-rich tracts occupy residues 63-94 and 143-167; these read RRSDIHENSKRFQRVSVEKENSATRSADKESN and KQRCERRDQRLLEQKPKRSEQDAGV. Positions 286 to 345 constitute an OVATE domain; the sequence is VVKCSSDPQKDFRDSMIEMIMENGINHPEELKELLVCYLRLNTDEYHDMIISVFQQVHND.

In terms of assembly, interacts with BLH1, BLH2, BLH3, BLH4, BLH6 and BLH10. As to expression, expressed in roots, rosette and cauline leaves, and flower buds.

It localises to the nucleus. Functionally, transcriptional repressor that regulates multiple aspects of plant growth and development through the regulation of BEL1-LIKE (BLH) and KNOX TALE (KNAT) homeodomain transcription factors. Required for embryo development. The chain is Transcription repressor OFP5 (OFP5) from Arabidopsis thaliana (Mouse-ear cress).